Reading from the N-terminus, the 112-residue chain is Nucleoid-associated protein CA_C0126 (112 aa).

Over residues 93 to 102 the composition is skewed to basic and acidic residues; the sequence is EEETSGEMKK. The tract at residues 93 to 112 is disordered; the sequence is EEETSGEMKKLTGGLNIPGL.

This sequence belongs to the YbaB/EbfC family. Homodimer.

It localises to the cytoplasm. The protein resides in the nucleoid. Binds to DNA and alters its conformation. May be involved in regulation of gene expression, nucleoid organization and DNA protection. The chain is Nucleoid-associated protein CA_C0126 from Clostridium acetobutylicum (strain ATCC 824 / DSM 792 / JCM 1419 / IAM 19013 / LMG 5710 / NBRC 13948 / NRRL B-527 / VKM B-1787 / 2291 / W).